A 122-amino-acid chain; its full sequence is Large ribosomal subunit protein bL12 (122 aa).

The protein belongs to the bacterial ribosomal protein bL12 family. In terms of assembly, homodimer. Part of the ribosomal stalk of the 50S ribosomal subunit. Forms a multimeric L10(L12)X complex, where L10 forms an elongated spine to which 2 to 4 L12 dimers bind in a sequential fashion. Binds GTP-bound translation factors.

Functionally, forms part of the ribosomal stalk which helps the ribosome interact with GTP-bound translation factors. Is thus essential for accurate translation. In Cronobacter sakazakii (strain ATCC BAA-894) (Enterobacter sakazakii), this protein is Large ribosomal subunit protein bL12.